We begin with the raw amino-acid sequence, 85 residues long: Small ribosomal subunit protein uS17 (85 aa).

Belongs to the universal ribosomal protein uS17 family. In terms of assembly, part of the 30S ribosomal subunit.

Its function is as follows. One of the primary rRNA binding proteins, it binds specifically to the 5'-end of 16S ribosomal RNA. The protein is Small ribosomal subunit protein uS17 of Anaeromyxobacter dehalogenans (strain 2CP-1 / ATCC BAA-258).